Here is a 66-residue protein sequence, read N- to C-terminus: Large ribosomal subunit protein bL33c (66 aa).

The protein belongs to the bacterial ribosomal protein bL33 family.

It localises to the plastid. Its subcellular location is the chloroplast. This is Large ribosomal subunit protein bL33c from Nasturtium officinale (Watercress).